A 101-amino-acid chain; its full sequence is Urease subunit beta (101 aa).

Belongs to the urease beta subunit family. In terms of assembly, heterotrimer of UreA (gamma), UreB (beta) and UreC (alpha) subunits. Three heterotrimers associate to form the active enzyme.

The protein localises to the cytoplasm. The catalysed reaction is urea + 2 H2O + H(+) = hydrogencarbonate + 2 NH4(+). The protein operates within nitrogen metabolism; urea degradation; CO(2) and NH(3) from urea (urease route): step 1/1. The polypeptide is Urease subunit beta (Burkholderia thailandensis (strain ATCC 700388 / DSM 13276 / CCUG 48851 / CIP 106301 / E264)).